A 63-amino-acid chain; its full sequence is Large ribosomal subunit protein bL35 (63 aa).

This sequence belongs to the bacterial ribosomal protein bL35 family.

This is Large ribosomal subunit protein bL35 from Campylobacter jejuni subsp. doylei (strain ATCC BAA-1458 / RM4099 / 269.97).